The sequence spans 141 residues: Ribonuclease VapC16 (141 aa).

Asp-99 contributes to the Mg(2+) binding site. The disordered stretch occupies residues 99 to 141 (DHAHTAHRRASGSPSTSIRPCAHRPGTAAWPDDHHRRRPVSCL).

This sequence belongs to the PINc/VapC protein family. The cofactor is Mg(2+).

Its function is as follows. Toxic component of a type II toxin-antitoxin (TA) system. An RNase. The cognate antitoxin is VapB16. This Mycobacterium tuberculosis (strain ATCC 25618 / H37Rv) protein is Ribonuclease VapC16.